We begin with the raw amino-acid sequence, 475 residues long: Crocetin glucosyltransferase 3 (475 aa).

Histidine 16 serves as the catalytic Proton acceptor. An an anthocyanidin-binding site is contributed by histidine 16. The active-site Charge relay is the aspartate 123. Positions 144, 354, 356, 371, 374, 375, 376, and 379 each coordinate UDP-alpha-D-glucose. Residue alanine 394 participates in an anthocyanidin binding. UDP-alpha-D-glucose contacts are provided by glutamate 395 and glutamine 396.

Belongs to the UDP-glycosyltransferase family. As to expression, mainly expressed in stamens.

It carries out the reaction crocetin + UDP-alpha-D-glucose = beta-D-glucosyl crocetin + UDP. It catalyses the reaction beta-D-glucosyl crocetin + UDP-alpha-D-glucose = bis(beta-D-glucosyl) crocetin + UDP. The catalysed reaction is beta-D-gentiobiosyl crocetin + UDP-alpha-D-glucose = beta-D-gentiobiosyl beta-D-glucosyl crocetin + UDP. Crocetin glucosyltransferase involved in the synthesis of crocin, one of the apocarotenoids responsible for the color and bitter taste of saffron. In Crocus sativus (Saffron), this protein is Crocetin glucosyltransferase 3 (GLT3).